The following is a 343-amino-acid chain: MEAVKLTQLVSCAGUAAKMSPETLAQVLRYLPEINDPNALVGTNTADDAAVYRISDEQAIVLTVDYFTPVVDDPYYFGVIAAANSLSDIYAMGAKPLFALNVVGFPKKLPPEILATILKGGADKAREAGIPVLGGHTVDDAEPKYGMVVCGLVHPDKIVKNHPPHPGDSLILTKPLGIGVLTTGMKRGIVPENTAKKVMEVMETLNDKAAEVMVEVGVSAATDITGFGLLGHLKEMLQEEFGAEIYLTKIPAIEGAWEFAGMRVFPGGAKNNLNYLLPHLDFAGEFAEEEKLFLADPQTSGGLLMAVSQEKKEELVKKLQQKGVLAAEIGIITGNKGKIVVKR.

The active site involves Sec-15. Residue Sec-15 is a non-standard amino acid, selenocysteine. ATP contacts are provided by residues Lys-18 and 45–47 (TAD). Residue Asp-48 coordinates Mg(2+). ATP contacts are provided by residues Asp-65, Asp-88, and 135–137 (GHT). Mg(2+) is bound at residue Asp-88. Asp-223 serves as a coordination point for Mg(2+).

It belongs to the selenophosphate synthase 1 family. Class I subfamily. In terms of assembly, homodimer. Mg(2+) serves as cofactor.

The enzyme catalyses hydrogenselenide + ATP + H2O = selenophosphate + AMP + phosphate + 2 H(+). In terms of biological role, synthesizes selenophosphate from selenide and ATP. The protein is Selenide, water dikinase of Carboxydothermus hydrogenoformans (strain ATCC BAA-161 / DSM 6008 / Z-2901).